The primary structure comprises 279 residues: Undecaprenyl-diphosphatase (279 aa).

The next 6 membrane-spanning stretches (helical) occupy residues 45-65, 85-105, 113-133, 188-208, 226-246, and 255-275; these read FVEM…IVIY, WQLW…ALPF, FNFM…FIWV, SVAA…YSGL, LILL…IRFL, and FTIF…YWLV.

It belongs to the UppP family.

The protein resides in the cell membrane. The catalysed reaction is di-trans,octa-cis-undecaprenyl diphosphate + H2O = di-trans,octa-cis-undecaprenyl phosphate + phosphate + H(+). Functionally, catalyzes the dephosphorylation of undecaprenyl diphosphate (UPP). Confers resistance to bacitracin. The chain is Undecaprenyl-diphosphatase from Streptococcus agalactiae serotype III (strain NEM316).